The primary structure comprises 416 residues: Casein kinase I isoform epsilon (416 aa).

Residues 9–277 enclose the Protein kinase domain; it reads YRLGRKIGSG…YLRQLFRNLF (269 aa). Residues 15–23 and K38 contribute to the ATP site; that span reads IGSGSFGDI. D128 (proton acceptor) is an active-site residue. The span at 301 to 318 shows a compositional bias: basic and acidic residues; sequence PEDMDRERREHEREERMG. A disordered region spans residues 301–416; sequence PEDMDRERRE…TSVPFDHLGK (116 aa). The span at 324 to 338 shows a compositional bias: low complexity; that stretch reads ATRALPPGPPAGATG. Composition is skewed to polar residues over residues 350–365 and 400–409; these read STPTSRIQQSGNTSPR and SRISASQTSV.

It belongs to the protein kinase superfamily. CK1 Ser/Thr protein kinase family. Casein kinase I subfamily. In terms of assembly, monomer. Component of the circadian core oscillator, which includes the CRY proteins, CLOCK, or NPAS2, BMAL1 or BMAL2, CSNK1E, and the PER proteins.

The protein localises to the cytoplasm. The catalysed reaction is L-seryl-[protein] + ATP = O-phospho-L-seryl-[protein] + ADP + H(+). It carries out the reaction L-threonyl-[protein] + ATP = O-phospho-L-threonyl-[protein] + ADP + H(+). Casein kinases are operationally defined by their preferential utilization of acidic proteins such as caseins as substrates. Can phosphorylate a large number of proteins. Participates in Wnt signaling. Phosphorylates DVL1. Central component of the circadian clock. May act as a negative regulator of circadian rhythmicity by phosphorylating PER1 and PER2. Retains PER1 in the cytoplasm. This chain is Casein kinase I isoform epsilon (CSNK1E), found in Gallus gallus (Chicken).